Reading from the N-terminus, the 122-residue chain is MIQQESRLKVADNSGAREVLVIKVLGGSGRRYANIGDVVVATVKDATPGGVVKKGQVVKAVVVRTKRGVRRSDGSYIRFDENACVIIRDDKSPRGTRIFGPVARELRDKDFMKIISLAPEVI.

Belongs to the universal ribosomal protein uL14 family. As to quaternary structure, part of the 50S ribosomal subunit. Forms a cluster with proteins L3 and L19. In the 70S ribosome, L14 and L19 interact and together make contacts with the 16S rRNA in bridges B5 and B8.

Binds to 23S rRNA. Forms part of two intersubunit bridges in the 70S ribosome. This Geobacillus thermodenitrificans (strain NG80-2) protein is Large ribosomal subunit protein uL14.